The sequence spans 602 residues: Multicopper oxidase aurL2 (602 aa).

The first 17 residues, 1–17, serve as a signal peptide directing secretion; sequence MLFRFLALLPFVAGAFA. Plastocyanin-like domains are found at residues 38–149 and 160–317; these read DIKI…VRDA and IPLL…KYRC. Residues Asn52 and Asn80 are each glycosylated (N-linked (GlcNAc...) asparagine). Cu cation-binding residues include His84, His86, His130, and His132. Residues Asn201, Asn247, Asn337, Asn383, Asn387, Asn419, and Asn424 are each glycosylated (N-linked (GlcNAc...) asparagine). Residues 421-556 enclose the Plastocyanin-like 3 domain; the sequence is TTPNYTLALE…QVMGMATVWV (136 aa). His469 is a binding site for Cu cation. 2 N-linked (GlcNAc...) asparagine glycosylation sites follow: Asn482 and Asn486.

This sequence belongs to the multicopper oxidase family.

Its pathway is pigment biosynthesis. In terms of biological role, multicopper oxidase; part of the gene cluster that mediates the biosynthesis of aurofusarin, a red mycelium pigment which is acting as a mycotoxin. The first step is performed by the polyketide synthase which condenses one acetyl-CoA and 6 malonyl-CoA units to form the first intermediate, the cyclic heptaketide and yellow pigment YWA1. The C2 hydroxyl group in the pyrone ring of YWA1 is probably formed during ring closure by an aldol-type cyclization reaction. The dehydratase aurZ then acts as the first tailoring enzyme in the aurofusarin biosynthetic pathway by converting YWA1 to nor-rubrofusarin. Nor-rubrofusarin is then methylated to rubrofusarin by the O-methyltransferase aurJ. Rubrofusarin is then transported across the plasma membrane by the rubrofusarin-specific pump aurT for further enzymatic processing by the extracellular complex composed of GIP1, aurF, aurO and aurS to yield aurofusarin. The protein is Multicopper oxidase aurL2 (aurL2) of Gibberella zeae (strain ATCC MYA-4620 / CBS 123657 / FGSC 9075 / NRRL 31084 / PH-1) (Wheat head blight fungus).